The chain runs to 138 residues: Protein transport protein got1 homolog (138 aa).

The Cytoplasmic segment spans residues 1–7 (MFTDQQK). A helical transmembrane segment spans residues 8 to 28 (IGAMLSAMGLFFGFLGVLLFL). The Lumenal portion of the chain corresponds to 29-30 (DR). The helical transmembrane segment at 31–51 (NLLALGNLLLVSGIVLILGLQ) threads the bilayer. The Cytoplasmic segment spans residues 52 to 62 (KTTKFFAQKKK). Residues 63–82 (IKGTILFFFGIVVLLVTRWT) form a helical membrane-spanning segment. Residues 83 to 87 (FVGMV) are Lumenal-facing. A helical transmembrane segment spans residues 88–108 (IEIFGFVNLFGDAFPIVISIL). Residues 109–138 (RKLPIIGNILNHPLVNRLLQKADSGNELPF) are Cytoplasmic-facing.

It belongs to the GOT1 family.

The protein resides in the golgi apparatus membrane. May be involved in fusion of ER-derived transport vesicles with the Golgi complex. The chain is Protein transport protein got1 homolog (golt1) from Dictyostelium discoideum (Social amoeba).